Consider the following 264-residue polypeptide: Thymidylate synthase (264 aa).

Position 21 (Arg-21) interacts with dUMP. (6R)-5,10-methylene-5,6,7,8-tetrahydrofolate is bound at residue His-51. Position 126 to 127 (126 to 127) interacts with dUMP; that stretch reads RR. Cys-146 serves as the catalytic Nucleophile. Residues 166-169, Asn-177, and 207-209 contribute to the dUMP site; these read RSGD and HLY. Residue Asp-169 participates in (6R)-5,10-methylene-5,6,7,8-tetrahydrofolate binding. Ala-263 serves as a coordination point for (6R)-5,10-methylene-5,6,7,8-tetrahydrofolate.

Belongs to the thymidylate synthase family. Bacterial-type ThyA subfamily. As to quaternary structure, homodimer.

Its subcellular location is the cytoplasm. It carries out the reaction dUMP + (6R)-5,10-methylene-5,6,7,8-tetrahydrofolate = 7,8-dihydrofolate + dTMP. It functions in the pathway pyrimidine metabolism; dTTP biosynthesis. Its function is as follows. Catalyzes the reductive methylation of 2'-deoxyuridine-5'-monophosphate (dUMP) to 2'-deoxythymidine-5'-monophosphate (dTMP) while utilizing 5,10-methylenetetrahydrofolate (mTHF) as the methyl donor and reductant in the reaction, yielding dihydrofolate (DHF) as a by-product. This enzymatic reaction provides an intracellular de novo source of dTMP, an essential precursor for DNA biosynthesis. The sequence is that of Thymidylate synthase from Xanthomonas campestris pv. campestris (strain 8004).